We begin with the raw amino-acid sequence, 816 residues long: MSTVEPNAYDPQQVETSAQQFWDATRAFQVDENSDKPKFYCLSMLPYPSGALHMGHVRNYTISDVVSRYKRMTGHNVLQPMGWDAFGLPAENAAIKNKTAPAKWTYANIEHMRAQLKSLGYAIDWSREFATCTPDYYVHEQRMFTRLMRKGLAYRRNAVVNWDPIDQTVLANEQVIDGRGWRSGALVEKREIPQWFLRITDYAQELLDGLDQLDGWPDSVKTMQRNWIGRSEGLEIQFDVRDTTGAALDPLRVFTTRPDTLMGVTFVSIAAEHPLAQHAAKSNPELASMLETLKHGGVSEAELETQEKRGMATGLTAVHPISGEEVPVWVANFVLMGYGTGAVMAVPGHDQRDFEFANKYGLPIVQVVKLREPRNDDEQAWDATQWRDWYTDKSRELELINSAEFDGLDYHGAFEALAERFERKGQGQRRINYRLRDWGVSRQRYWGCPIPVIYCAKCGAVPVPEDQLPVVLPENVEFAGTGSPIKTDPTWRQTTCPECGGPAERETDTFDTFMESSWYVARYTSPNARDMVDRRANYWMPADLYVGGIEHAILHLMYFRFYHKLMRDARLVDSDEPVTNLLTQGMVIAETFYRDADNGGKDWINPADVEIQRDERGRVVGASLIADGQPVHIGGTEKMSKSKNNGVDPQAMVAKYGADTVRLFSMFAAPPEQSLEWNEAGVDGMARFMRRLWVQVHKHVGEGAAALDVASLSAEQKAIRRKTHETIGKVDDDYGRRHSFNTAIAAVMELSNALAKFDDASAQGRAVRQEALEAMVLLLNPITPHASHALWQVLGRGETLLENVPFPQVDAAGAGA.

The 'HIGH' region signature appears at 46–56 (PYPSGALHMGH). A 'KMSKS' region motif is present at residues 638 to 642 (KMSKS). Lys-641 provides a ligand contact to ATP.

Belongs to the class-I aminoacyl-tRNA synthetase family.

The protein localises to the cytoplasm. The catalysed reaction is tRNA(Leu) + L-leucine + ATP = L-leucyl-tRNA(Leu) + AMP + diphosphate. This chain is Leucine--tRNA ligase, found in Xanthomonas campestris pv. campestris (strain ATCC 33913 / DSM 3586 / NCPPB 528 / LMG 568 / P 25).